Consider the following 494-residue polypeptide: Aspartyl/glutamyl-tRNA(Asn/Gln) amidotransferase subunit B (494 aa).

The protein belongs to the GatB/GatE family. GatB subfamily. Heterotrimer of A, B and C subunits.

It carries out the reaction L-glutamyl-tRNA(Gln) + L-glutamine + ATP + H2O = L-glutaminyl-tRNA(Gln) + L-glutamate + ADP + phosphate + H(+). The catalysed reaction is L-aspartyl-tRNA(Asn) + L-glutamine + ATP + H2O = L-asparaginyl-tRNA(Asn) + L-glutamate + ADP + phosphate + 2 H(+). Allows the formation of correctly charged Asn-tRNA(Asn) or Gln-tRNA(Gln) through the transamidation of misacylated Asp-tRNA(Asn) or Glu-tRNA(Gln) in organisms which lack either or both of asparaginyl-tRNA or glutaminyl-tRNA synthetases. The reaction takes place in the presence of glutamine and ATP through an activated phospho-Asp-tRNA(Asn) or phospho-Glu-tRNA(Gln). The sequence is that of Aspartyl/glutamyl-tRNA(Asn/Gln) amidotransferase subunit B from Rhodopseudomonas palustris (strain BisB18).